The sequence spans 2527 residues: MGRSDSRAGALLEGGCEQNIDPRRAAHCHHPRLATSSLRCSQPSGTCLNGGRCEVANGTEACVCSGPFVGQRCQDPNPCLSTPCKNAGTCHVVEHGGTVNYACSCPLGFSGPLCLTPLDNACLANPCRNGGTCDLLTLTEYKCRCPPGWSGKSCQQADPCASNPCANGGQCLPFESSYICGCPPGFHGPTCRQDVNECSQNPGLCRHGGTCHNEIGSYRCVCRATHTGPHCELPYVPCSPSPCQNGGTCRPTGDTTHECACLPGFAGQNCEENVDDCPGNNCKNGGACVDGVNTYNCRCPPEWTGQYCTEDVDECQLMPNACQNGGTCHNTHGGYNCVCVNGWTGEDCSENIDDCASAACFQGATCHDRVASFYCECPHGRTGLLCHLNDACISNPCNEGSNCDTNPVNGKAICTCPSGYTGPACSQDVDECALGANPCEHAGKCLNTLGSFECQCLQGYTGPRCEIDVNECISNPCQNDATCLDQIGEFQCICMPGYEGVYCEINTDECASSPCLHNGHCMDKINEFLCQCPKGFSGHLCQYDVDECASTPCKNGAKCLDGPNTYTCVCTEGYTGTHCEVDIDECDPDPCHYGFCKDGVATFTCLCQPGYTGHHCETNINECHSQPCRHGGTCQDRDNSYLCLCLKGTTGPNCEINLDDCASNPCDSGTCLDKIDGYECACEPGYTGSMCNVNIDECAGSPCHNGGTCEDGIAGFTCRCPEGYHDPTCLSEVNECNSNPCIHGACRDGLNGYKCDCAPGWSGTNCDINNNECESNPCVNGGTCKDMTSGYVCTCREGFSGPNCQTNINECASNPCLNQGTCIDDVAGYKCNCPLPYTGATCEVVLAPCATSPCKNSGVCKESEDYESFSCVCPTGWQGQTCEIDINECVKSPCRHGASCQNTNGSYRCLCQAGYTGRNCESDIDDCRPNPCHNGGSCTDGINMAFCDCLPGFQGAFCEEDINECASNPCRNGANCTDCVDSYTCTCPAGFNGIHCENNTPDCTESSCFNGGTCVDGINSFTCLCPPGFTGSYCQYDVNECDSRPCLHGGTCQDSYGTYKCTCPQGYTGLNCQNLVHWCDSAPCKNGGKCWQTNTQYHCECRSGWTGFNCDVLSVSCEVAAQKRGIDVTLLCQHGGLCVDEEDKHYCHCQAGYTGSYCEDEVDECSPNPCQNGATCTDYLGGFSCKCVAGYHGSNCSEEINECLSQPCQNGGTCIDLTNTYKCSCPRGTQGVHCEINVDDCHPHLDPASRSPKCFNNGTCVDQVGGYSCTCPPGFVGERCEGDINECLSNPCDPRGTQDCVQRVNDFHCECRAGHTGRRCESVINGCRGKPCKNGGVCAVASNTARGFICRCPAGFEGATCENDARTCGSLRCLNGGTCISGPRSPTCLCLGSFTGPECQFPASSPCVGSNPCYNQGTCEPTSESPFYRCLCPAKFNGLLCHILDYSFTGGAGRDIPPPQIEEACELPECQEDAGNKVCNLQCNNHACGWDGGDCSLNFNDPWKNCTQSLQCWKYFSDGHCDSQCNSASCLFDGFDCQRTEGQCNPLYDQYCKDHFSDGHCDQGCNSAECDWDGLDCADHVPERLAAGTLVLVVLLPPEQLRNNSFHFLRELSHVLHTNVVFKRDAEGQQMIFPYYGHEEELRKHPIKRSAVGWTTSSLLPSTNGGRQRRELDPMDIRGSIVYLEIDNRQCVQSSSQCFQSATDVAAFLGALASLGNLNIPYKIEAVKSETVEPPLPSQLHLMYLAAAAFVLLFFVGCGVLLSRKRRRQHGQLWFPEGFKVSEASKKKRREPLGEDSVGLKPLKNASDGALMDDNQNEWGDEDLETKKFRFEEPVVVPDLDDQTDHRQWTQQHLDAADLRMSAMAPTPPQGEVDADCMDVNVRGPDGFTPLMIASCSGGGLETGNSEEEEDAPAVISDFIYQGASLHNQTDRTGETALHLAARYSRSDAAKRLLEASADANIQDNMGRTPLHAAVSADAQGVFQILLRNRATDLDARMHDGTTPLILAARLAVEGMLEDLINSHADVNAVDDLGKSALHWAAAVNNVDAAVVLLKNGANKDMQNNKEETPLFLAAREGSYETAKVLLDHFANRDITDHMDRLPRDIAQERMHHDIVRLLDEYNLVRSPQLHGTALGGTPTLSPTLCSPNGYLGNLKSATQGKKARKPSTKGLACGSKEAKDLKARRKKSQDGKGCLLDSSSMLSPVDSLESPHGYLSDVASPPLLPSPFQQSPSMPLSHLPGMPDTHLGISHLNVAAKPEMAALAGSSRLAFEPPPPRLPHLPVASSASTVLSTNGSXGEEEWLAPSQYNPLRPGVASGTLSTQAAGLQHGMMGPLHSSLSTNTLSPMIYQGLPNTRLATQPHLVQTQQVQPQNLQIQPQNLQPPSQPHLSVSSAANGHLGRSFLGGEHSQADVQPLGPSSLPVHTILPQESQALPTSLPSSMVPPMTTTQFLTPPSQHSYSSSPVDNTPSHQLQVPEHPFLTPSPESPDQWSSSSPHSNISDWSEGISSPPTSMPSQITHIPEAFK.

An N-terminal signal peptide occupies residues 1-36; the sequence is MGRSDSRAGALLEGGCEQNIDPRRAAHCHHPRLATS. Topologically, residues 37–1741 are extracellular; the sequence is SLRCSQPSGT…VEPPLPSQLH (1705 aa). Intrachain disulfides connect Cys-40/Cys-53, Cys-47/Cys-62, Cys-64/Cys-73, Cys-79/Cys-90, Cys-84/Cys-103, Cys-105/Cys-114, Cys-122/Cys-133, Cys-127/Cys-143, Cys-145/Cys-154, Cys-160/Cys-171, Cys-165/Cys-180, Cys-182/Cys-191, Cys-198/Cys-211, Cys-205/Cys-220, Cys-222/Cys-231, Cys-238/Cys-249, Cys-243/Cys-259, Cys-261/Cys-270, Cys-277/Cys-288, Cys-282/Cys-297, Cys-299/Cys-308, Cys-315/Cys-328, Cys-322/Cys-337, Cys-339/Cys-348, Cys-355/Cys-366, Cys-360/Cys-375, Cys-377/Cys-386, Cys-392/Cys-403, Cys-397/Cys-414, Cys-416/Cys-425, Cys-432/Cys-445, Cys-439/Cys-454, and Cys-456/Cys-465. Residue Asn-57 is glycosylated (N-linked (GlcNAc...) asparagine). EGF-like domains lie at 75–115, 118–155, and 156–192; these read DPNP…PLCL, LDNACLANPCRNGGTCDLLTLTEYKCRCPPGWSGKSCQ, and QADPCASNPCANGGQCLPFESSYICGCPPGFHGPTCR. Residue Ser-81 is glycosylated (O-linked (Glc...) serine). O-linked (Fuc...) threonine glycosylation occurs at Thr-89. Thr-132 carries an O-linked (Fuc...) threonine glycan. A glycan (O-linked (Glc...) serine) is linked at Ser-162. In terms of domain architecture, EGF-like 4; calcium-binding spans 194–232; that stretch reads DVNECSQNPGLCRHGGTCHNEIGSYRCVCRATHTGPHCE. Thr-210 carries O-linked (Fuc...) threonine glycosylation. The EGF-like 5 domain occupies 234-271; it reads PYVPCSPSPCQNGGTCRPTGDTTHECACLPGFAGQNCE. Thr-248 carries O-linked (Fuc...) threonine; alternate glycosylation. Thr-248 carries O-linked (GalNAc...) threonine; alternate glycosylation. The region spanning 273 to 309 is the EGF-like 6; calcium-binding domain; it reads NVDDCPGNNCKNGGACVDGVNTYNCRCPPEWTGQYCT. The EGF-like 7; calcium-binding domain maps to 311–349; the sequence is DVDECQLMPNACQNGGTCHNTHGGYNCVCVNGWTGEDCS. The O-linked (Fuc...) threonine glycan is linked to Thr-327. In terms of domain architecture, EGF-like 8; calcium-binding spans 351–387; sequence NIDDCASAACFQGATCHDRVASFYCECPHGRTGLLCH. Ser-357 carries an O-linked (Glc...) serine glycan. O-linked (Fuc...) threonine glycosylation occurs at Thr-365. An EGF-like 9 domain is found at 388–426; the sequence is LNDACISNPCNEGSNCDTNPVNGKAICTCPSGYTGPACS. Ser-394 is a glycosylation site (O-linked (Glc...) serine). Residues 428-466 enclose the EGF-like 10; calcium-binding domain; that stretch reads DVDECALGANPCEHAGKCLNTLGSFECQCLQGYTGPRCE. Residues 436–437 are interaction with DLL4; it reads AN. Thr-448 and Ser-451 together coordinate Ca(2+). O-linked (Glc...) serine glycosylation occurs at Ser-451. An interaction with DLL4 region spans residues 464–468; the sequence is RCEID. Residues Asp-468, Val-469, and Glu-471 each coordinate Ca(2+). Positions 468 to 504 constitute an EGF-like 11; calcium-binding domain; it reads DVNECISNPCQNDATCLDQIGEFQCICMPGYEGVYCE. Intrachain disulfides connect Cys-472-Cys-483, Cys-477-Cys-492, and Cys-494-Cys-503. An O-linked (Glc...) serine glycan is attached at Ser-474. O-linked (Fuc...) threonine glycosylation is present at Thr-482. Ca(2+)-binding residues include Asp-485 and Gln-486. 3 residues coordinate Ca(2+): Asn-506, Thr-507, and Glu-509. One can recognise an EGF-like 12; calcium-binding domain in the interval 506–542; sequence NTDECASSPCLHNGHCMDKINEFLCQCPKGFSGHLCQ. 28 disulfide bridges follow: Cys-510/Cys-521, Cys-515/Cys-530, Cys-532/Cys-541, Cys-548/Cys-559, Cys-553/Cys-568, Cys-570/Cys-579, Cys-586/Cys-596, Cys-591/Cys-605, Cys-607/Cys-616, Cys-623/Cys-634, Cys-628/Cys-643, Cys-645/Cys-654, Cys-661/Cys-671, Cys-666/Cys-680, Cys-682/Cys-691, Cys-698/Cys-709, Cys-703/Cys-718, Cys-720/Cys-729, Cys-736/Cys-746, Cys-741/Cys-755, Cys-757/Cys-766, Cys-773/Cys-784, Cys-778/Cys-793, Cys-795/Cys-804, Cys-811/Cys-822, Cys-816/Cys-831, Cys-833/Cys-842, and Cys-849/Cys-860. O-linked (Glc...) serine glycosylation is present at Ser-512. The Ca(2+) site is built by Asp-523 and Lys-524. The EGF-like 13; calcium-binding domain occupies 544–580; it reads DVDECASTPCKNGAKCLDGPNTYTCVCTEGYTGTHCE. Ser-550 is a glycosylation site (O-linked (Glc...) serine). The EGF-like 14; calcium-binding domain maps to 582–617; the sequence is DIDECDPDPCHYGFCKDGVATFTCLCQPGYTGHHCE. The 37-residue stretch at 619-655 folds into the EGF-like 15; calcium-binding domain; it reads NINECHSQPCRHGGTCQDRDNSYLCLCLKGTTGPNCE. A glycan (O-linked (Glc...) serine) is linked at Ser-625. Thr-633 is a glycosylation site (O-linked (Fuc...) threonine). Residues 657–692 form the EGF-like 16; calcium-binding domain; it reads NLDDCASNPCDSGTCLDKIDGYECACEPGYTGSMCN. An O-linked (Glc...) serine glycan is attached at Ser-663. An EGF-like 17; calcium-binding domain is found at 694 to 730; it reads NIDECAGSPCHNGGTCEDGIAGFTCRCPEGYHDPTCL. Thr-708 is a glycosylation site (O-linked (Fuc...) threonine). The region spanning 732–767 is the EGF-like 18; calcium-binding domain; it reads EVNECNSNPCIHGACRDGLNGYKCDCAPGWSGTNCD. Ser-738 carries O-linked (Glc...) serine glycosylation. Residues 769-805 enclose the EGF-like 19 domain; that stretch reads NNNECESNPCVNGGTCKDMTSGYVCTCREGFSGPNCQ. Ser-775 is a glycosylation site (O-linked (Glc...) serine). An O-linked (Fuc...) threonine glycan is attached at Thr-783. Ser-800 is a glycosylation site (O-linked (GlcNAc) serine). In terms of domain architecture, EGF-like 20; calcium-binding spans 807-843; sequence NINECASNPCLNQGTCIDDVAGYKCNCPLPYTGATCE. O-linked (Glc...) serine glycosylation occurs at Ser-813. The O-linked (Fuc...) threonine glycan is linked to Thr-821. The EGF-like 21 domain maps to 845 to 883; that stretch reads VLAPCATSPCKNSGVCKESEDYESFSCVCPTGWQGQTCE. One can recognise an EGF-like 22; calcium-binding domain in the interval 885–921; that stretch reads DINECVKSPCRHGASCQNTNGSYRCLCQAGYTGRNCE. An N-linked (GlcNAc...) asparagine glycan is attached at Asn-904. O-linked (GlcNAc) threonine glycosylation occurs at Thr-916. In terms of domain architecture, EGF-like 23 spans 923-959; sequence DIDDCRPNPCHNGGSCTDGINMAFCDCLPGFQGAFCE. A glycan (O-linked (Fuc) serine) is linked at Ser-937. The region spanning 961–997 is the EGF-like 24; calcium-binding domain; it reads DINECASNPCRNGANCTDCVDSYTCTCPAGFNGIHCE. O-linked (Glc...) serine glycosylation is present at Ser-967. Asn-975 is a glycosylation site (N-linked (GlcNAc...) asparagine). 5 EGF-like domains span residues 999–1035, 1037–1073, 1075–1111, 1113–1159, and 1161–1197; these read NTPDCTESSCFNGGTCVDGINSFTCLCPPGFTGSYCQ, DVNECDSRPCLHGGTCQDSYGTYKCTCPQGYTGLNCQ, LVHWCDSAPCKNGGKCWQTNTQYHCECRSGWTGFNCD, LSVS…SYCE, and EVDECSPNPCQNGATCTDYLGGFSCKCVAGYHGSNCS. A glycan (O-linked (Fuc...) threonine) is linked at Thr-1013. Ser-1043 carries O-linked (Glc...) serine glycosylation. O-linked (Fuc...) threonine glycosylation occurs at Thr-1051. O-linked (Glc...) serine glycosylation occurs at Ser-1081. Cys-1117 and Cys-1138 are disulfide-bonded. O-linked (Fuc...) threonine glycosylation is present at Thr-1175. The N-linked (GlcNAc...) asparagine glycan is linked to Asn-1195. Positions 1199–1235 constitute an EGF-like 30; calcium-binding domain; it reads EINECLSQPCQNGGTCIDLTNTYKCSCPRGTQGVHCE. Ser-1205 is a glycosylation site (O-linked (Glc...) serine). Thr-1213 carries O-linked (Fuc...) threonine glycosylation. An EGF-like 31; calcium-binding domain is found at 1237–1281; sequence NVDDCHPHLDPASRSPKCFNNGTCVDQVGGYSCTCPPGFVGERCE. N-linked (GlcNAc...) asparagine glycosylation occurs at Asn-1257. 4 EGF-like domains span residues 1283–1321, 1323–1362, 1364–1400, and 1403–1442; these read DINECLSNPCDPRGTQDCVQRVNDFHCECRAGHTGRRCE, VINGCRGKPCKNGGVCAVASNTARGFICRCPAGFEGATCE, DARTCGSLRCLNGGTCISGPRSPTCLCLGSFTGPECQ, and ASSPCVGSNPCYNQGTCEPTSESPFYRCLCPAKFNGLLCH. The O-linked (Glc...) serine glycan is linked to Ser-1289. The O-linked (Fuc...) threonine glycan is linked to Thr-1378. Thr-1395 carries an O-linked (GlcNAc...) threonine glycan. The O-linked (Fuc...) threonine; alternate glycan is linked to Thr-1418. Residue Thr-1418 is glycosylated (O-linked (GalNAc...) threonine; alternate). LNR repeat units follow at residues 1465-1505, 1506-1547, and 1548-1587; these read CELP…PWKN, CTQS…CNPL, and YDQYCKDHFSDGHCDQGCNSAECDWDGLDCADHVPERLAA. Positions 1473, 1476, 1491, and 1494 each coordinate Ca(2+). An N-linked (GlcNAc...) asparagine glycan is attached at Asn-1505. Residue Asn-1603 is glycosylated (N-linked (GlcNAc...) asparagine). The O-linked (GalNAc...) threonine glycan is linked to Thr-1731. The interaction with PSEN1 stretch occupies residues 1734 to 1766; it reads PPLPSQLHLMYLAAAAFVLLFFVGCGVLLSRKR. A helical membrane pass occupies residues 1742–1762; that stretch reads LMYLAAAAFVLLFFVGCGVLL. Topologically, residues 1763–2527 are cytoplasmic; sequence SRKRRRQHGQ…QITHIPEAFK (765 aa). Lys-1765 participates in a covalent cross-link: Glycyl lysine isopeptide (Lys-Gly) (interchain with G-Cter in ubiquitin). The disordered stretch occupies residues 1786–1814; the sequence is KKKRREPLGEDSVGLKPLKNASDGALMDD. Thr-1867 carries the phosphothreonine modification. ANK repeat units follow at residues 1933–1962, 1966–1996, 2000–2029, 2033–2062, and 2066–2095; these read TGETALHLAARYSRSDAAKRLLEASADANI, MGRTPLHAAVSADAQGVFQILLRNRATDLDA, DGTTPLILAARLAVEGMLEDLINSHADVNA, LGKSALHWAAAVNNVDAAVVLLKNGANKDM, and KEETPLFLAAREGSYETAKVLLDHFANRDI. Residues 1953–1961 form an HIF1AN-binding region; sequence LLEASADAN. Asn-1961 carries the (3S)-3-hydroxyasparagine; by HIF1AN; partial modification. Positions 2020-2028 are HIF1AN-binding; it reads LINSHADVN. Position 2028 is a (3S)-3-hydroxyasparagine; by HIF1AN (Asn-2028). Disordered stretches follow at residues 2157–2201, 2378–2424, and 2436–2527; these read SATQ…DSSS, QPQN…SLPV, and PTSL…EAFK. The segment covering 2378–2391 has biased composition (low complexity); it reads QPQNLQPPSQPHLS. The span at 2436-2474 shows a compositional bias: polar residues; that stretch reads PTSLPSSMVPPMTTTQFLTPPSQHSYSSSPVDNTPSHQL. Positions 2484–2499 are enriched in low complexity; it reads PSPESPDQWSSSSPHS. Positions 2500–2520 are enriched in polar residues; the sequence is NISDWSEGISSPPTSMPSQIT.

Belongs to the NOTCH family. In terms of assembly, heterodimer of a C-terminal fragment N(TM) and an N-terminal fragment N(EC) which are probably linked by disulfide bonds. Interacts with DNER, DTX1, DTX2 and RBPJ/RBPSUH. Also interacts with MAML1, MAML2 and MAML3 which act as transcriptional coactivators for NOTCH1. Notch 1 intracellular domain interacts with SNW1; the interaction involves multimerized NOTCH1 NICD and is implicated in a formation of an intermediate preactivation complex which associates with DNA-bound CBF-1/RBPJ. The activated membrane-bound form interacts with AAK1 which promotes NOTCH1 stabilization. Forms a trimeric complex with FBXW7 and SGK1. Interacts with HIF1AN. HIF1AN negatively regulates the function of notch intracellular domain (NICD), accelerating myogenic differentiation. Interacts (via NICD) with SNAI1 (via zinc fingers); the interaction induces SNAI1 degradation via MDM2-mediated ubiquitination and inhibits SNAI1-induced cell invasion. Interacts (via NICD) with MDM2A. Interacts (via NICD) with BCL6; the interaction decreases MAML1 recruitment by NOTCH1 NICD on target genes DNA and inhibits NOTCH1 transactivation activity. Interacts with THBS4. Interacts (via the EGF-like repeat region) with CCN3 (via CTCK domain). Interacts (via EGF-like domains) with DLL4 (via N-terminal DSL and MNNL domains). Interacts with ZMIZ1. Interacts (via NICD domain) with MEGF10 (via the cytoplasmic domain). Interacts with DLL1 and JAG1. Interacts (via NICD domain) with PRAG1. Forms a complex with PRAG1, N1ICD and MAML1, in a MAML1-dependent manner. Interacts (via transmembrane region) with PSEN1; the interaction is direct. Interacts with ZFP64. Synthesized in the endoplasmic reticulum as an inactive form which is proteolytically cleaved by a furin-like convertase in the trans-Golgi network before it reaches the plasma membrane to yield an active, ligand-accessible form. Cleavage results in a C-terminal fragment N(TM) and a N-terminal fragment N(EC). Following ligand binding, it is cleaved by ADAM17 to yield a membrane-associated intermediate fragment called notch extracellular truncation (NEXT). Following endocytosis, this fragment is then cleaved by one of the catalytic subunits of gamma-secretase (PSEN1 or PSEN2) to release a Notch-derived peptide containing the intracellular domain (NICD) from the membrane. Post-translationally, phosphorylated. In terms of processing, O-linked glycosylation by GALNT11 is involved in determination of left/right symmetry: glycosylation promotes activation of NOTCH1, possibly by promoting cleavage by ADAM17, modulating the balance between motile and immotile (sensory) cilia at the left-right organiser (LRO). O-glycosylated on the EGF-like domains. O-glucosylated at Ser-451 by KDELC1 and KDELC2. Contains both O-linked fucose and O-linked glucose in the EGF-like domains 11, 12 and 13, which are interacting with the residues on DLL4. MFNG-, RFNG- and LFNG-mediated modification of O-fucose residues at specific EGF-like domains results in inhibition of its activation by JAG1 and enhancement of its activation by DLL1 via an increased binding to DLL1. Ubiquitinated. Undergoes 'Lys-29'-linked polyubiquitination by ITCH; promotes the lysosomal degradation of non-activated internalized NOTCH1. Deubiquitination by USP12 is required for transport of internalized non-activated receptor from late endosomes to lysosomes for degradation. Monoubiquitination at Lys-1765 is required for activation by gamma-secretase cleavage, it promotes interaction with AAK1, which stabilizes it. Deubiquitination by EIF3F is necessary for nuclear import of activated Notch. Post-translationally, hydroxylated at Asn-1961 by HIF1AN. Hydroxylated at Asn-2028 by HIF1AN. Hydroxylation reduces affinity for HI1AN and may thus indirectly modulate negative regulation of NICD.

It is found in the cell membrane. The protein resides in the late endosome membrane. The protein localises to the nucleus. In terms of biological role, functions as a receptor for membrane-bound ligands Jagged-1 (JAG1), Jagged-2 (JAG2) and Delta-1 (DLL1) to regulate cell-fate determination. Upon ligand activation through the released notch intracellular domain (NICD) it forms a transcriptional activator complex with RBPJ/RBPSUH and activates genes of the enhancer of split locus. Affects the implementation of differentiation, proliferation and apoptotic programs. Involved in angiogenesis; negatively regulates endothelial cell proliferation and migration and angiogenic sprouting. Involved in the maturation of both CD4(+) and CD8(+) cells in the thymus. Important for follicular differentiation and possibly cell fate selection within the follicle. During cerebellar development, functions as a receptor for neuronal DNER and is involved in the differentiation of Bergmann glia. Represses neuronal and myogenic differentiation. May play an essential role in postimplantation development, probably in some aspect of cell specification and/or differentiation. May be involved in mesoderm development, somite formation and neurogenesis. May enhance HIF1A function by sequestering HIF1AN away from HIF1A. Required for the THBS4 function in regulating protective astrogenesis from the subventricular zone (SVZ) niche after injury. Involved in determination of left/right symmetry by modulating the balance between motile and immotile (sensory) cilia at the left-right organiser (LRO). This is Neurogenic locus notch homolog protein 1 (NOTCH1) from Cricetulus griseus (Chinese hamster).